The chain runs to 3574 residues: Chromatin structure-remodeling complex protein SYD (3574 aa).

Disordered stretches follow at residues 76–105, 123–211, and 328–372; these read SCLP…GVSN, TSGR…KIDD, and DPKG…TERS. 2 stretches are compositionally biased toward polar residues: residues 124 to 148 and 155 to 168; these read SGRQ…QSNR and PSNL…SQPH. Over residues 169–181 the composition is skewed to basic and acidic residues; that stretch reads NRSETMNQRDVKS. Positions 194–204 are enriched in polar residues; sequence WDQNMDNSQIF. Over residues 358-372 the composition is skewed to basic and acidic residues; the sequence is RLDEMDFSSKETERS. The HSA domain maps to 573–647; that stretch reads QKMKEERQRR…QREKINLLKI (75 aa). Positions 766-933 constitute a Helicase ATP-binding domain; sequence VSLYNNHLNG…WALLNFLLPN (168 aa). Position 779-786 (779-786) interacts with ATP; that stretch reads DEMGLGKT. The short motif at 884 to 887 is the DEAH box element; that stretch reads DEGH. In terms of domain architecture, Helicase C-terminal spans 1077 to 1223; the sequence is MLDRMLPKLK…KLGVANQSIT (147 aa). Positions 1266-1273 match the Nuclear localization signal motif; sequence ARRESEID. Disordered regions lie at residues 1342–1472, 1500–1575, 1588–1637, 1690–1811, 1830–1868, 2040–2068, 2089–2115, 2143–2162, 2179–2220, 2235–2338, 2350–2451, 2517–2538, 2684–2703, 2718–2759, 2865–2884, 3017–3045, 3189–3208, 3316–3337, and 3512–3574; these read KRKD…VSRT, HPTS…SDAE, IVSR…SGSH, GPVQ…QIEV, QPHF…QTAD, SSLS…LEKN, SSEE…TDEV, SSML…HSSI, LDDK…QMED, EEKE…DTND, EEKE…HMED, FESE…EVSE, SEEI…QPDD, IDIG…RDSR, DTEK…LHQL, EGTD…PSSS, NADS…VVEK, VDDS…AEPM, and TEDT…NEDV. Residues 1362-1371 show a composition bias toward basic and acidic residues; it reads AREVRSYEEK. Composition is skewed to polar residues over residues 1399–1426 and 1500–1511; these read SLAN…QAIT and HPTSSLALTSPD. Positions 1532-1546 are enriched in basic residues; the sequence is GRGRGRSRGRGAGRG. 2 stretches are compositionally biased toward polar residues: residues 1555–1571 and 1597–1614; these read GSNS…TSLA and EGST…SATT. Positions 1617–1627 are enriched in basic and acidic residues; the sequence is RSDKAADKDLD. 6 stretches are compositionally biased toward polar residues: residues 1690-1699, 1706-1752, 1796-1806, 1832-1849, 2040-2057, and 2090-2110; these read GPVQNQNAVS, KSPS…STVE, DASSARSTGLT, HFSQ…SLSQ, SSLS…STTA, and SEEQ…LQAS. The segment covering 2248-2260 has biased composition (acidic residues); the sequence is DDADTEQDPEESV. Residues 2438–2451 show a composition bias toward basic and acidic residues; sequence DRPKDGTADTHMED. A compositionally biased stretch (polar residues) spans 2718–2735; that stretch reads IDIGITSGKTCQPSSSTQ. Polar residues-rich tracts occupy residues 3034 to 3045 and 3191 to 3204; these read KSQLADTEPSSS and DSQL…SSPS. The span at 3523–3538 shows a compositional bias: basic and acidic residues; it reads KTEEKDAENPSDRLDG.

Belongs to the SNF2/RAD54 helicase family. In terms of assembly, interacts with LFY. Binds to BARD1/ROW1. Phosphorylated. Mostly expressed in rapidly dividing cells in the vegetative, inflorescence, and root meristems, as well as in young leaf and flower primordia. Isoform 1 is predominantly found in seedlings whereas isoform 2 is present in both seedlings and inflorescences (at protein level).

It localises to the cytoplasm. The protein resides in the nucleus. In terms of biological role, catalytic component of the chromatin structure-remodeling complex (RSC), which is involved in transcription regulation and nucleosome positioning. Controls stem cell fate via the transcription regulation of WUS in the shoot apical meristem, by modulating its promoter. LFY-dependent repressor of the meristem identity switch from vegetative to reproductive development probably by modulating chromatin state. Involved in the regulation of floral homeotic gene expression in response to environmental stimuli. Required for carpel and ovule development, and for cotyledon separation via the regulation of CUC2 transcription. Regulates the promoters of several genes downstream of the jasmonate (JA) and ethylene (ET) signaling pathways. Required for resistance against the necrotrophic pathogen B.cinerea but not the biotrophic pathogen P.syringae. This chain is Chromatin structure-remodeling complex protein SYD (SYD), found in Arabidopsis thaliana (Mouse-ear cress).